The sequence spans 219 residues: Probable glutathione S-transferase GSTF1 (219 aa).

In terms of domain architecture, GST N-terminal spans 2–83 (TPVKVFGPAQ…YILRKYKTRE (82 aa)). Residues Ser12, 41–42 (HK), 54–55 (QI), and 67–68 (ES) each bind glutathione. The 129-residue stretch at 91–219 (NLREAAMVDV…LAAVMAPQGA (129 aa)) folds into the GST C-terminal domain.

The protein belongs to the GST superfamily. Phi family. Constitutively expressed in roots.

The enzyme catalyses RX + glutathione = an S-substituted glutathione + a halide anion + H(+). Its function is as follows. Conjugation of reduced glutathione to a wide number of exogenous and endogenous hydrophobic electrophiles. This chain is Probable glutathione S-transferase GSTF1 (GSTF1), found in Oryza sativa subsp. japonica (Rice).